The sequence spans 538 residues: Interleukin-21 receptor (538 aa).

The signal sequence occupies residues M1–G19. 3 disulfide bridges follow: C20-C109, C25-C35, and C65-C81. Over C20–E232 the chain is Extracellular. Fibronectin type-III domains lie at P21–I118 and K119–E228. 5 N-linked (GlcNAc...) asparagine glycosylation sites follow: N73, N97, N104, N125, and N135. A C-linked (Man) tryptophan glycan is attached at W214. A WSXWS motif motif is present at residues W214–S218. Residues G233–W253 form a helical membrane-spanning segment. Residues S254–S538 lie on the Cytoplasmic side of the membrane. The short motif at K266–E274 is the Box 1 motif element. 2 disordered regions span residues E342–R367 and E457–M487.

It belongs to the type I cytokine receptor family. Type 4 subfamily. In terms of assembly, heterodimer with the common gamma subunit. Associates with JAK1. Post-translationally, C-mannosylated at Trp-214 in the WSXWS motif, the sugar chain makes extensive hydrogen bonds with Asn-73 sugar, and bridges the two fibronectin domains transforming the V-shaped receptor into an A-frame. As to expression, selectively expressed in lymphoid tissues. Most highly expressed in thymus and spleen.

The protein localises to the membrane. Its function is as follows. This is a receptor for interleukin-21. In Homo sapiens (Human), this protein is Interleukin-21 receptor (IL21R).